The following is a 412-amino-acid chain: Serine hydroxymethyltransferase (412 aa).

Residues leucine 119 and 123–125 (GHL) each bind (6S)-5,6,7,8-tetrahydrofolate. N6-(pyridoxal phosphate)lysine is present on lysine 228.

It belongs to the SHMT family. As to quaternary structure, homodimer. Pyridoxal 5'-phosphate serves as cofactor.

The protein localises to the cytoplasm. It carries out the reaction (6R)-5,10-methylene-5,6,7,8-tetrahydrofolate + glycine + H2O = (6S)-5,6,7,8-tetrahydrofolate + L-serine. It functions in the pathway one-carbon metabolism; tetrahydrofolate interconversion. It participates in amino-acid biosynthesis; glycine biosynthesis; glycine from L-serine: step 1/1. In terms of biological role, catalyzes the reversible interconversion of serine and glycine with tetrahydrofolate (THF) serving as the one-carbon carrier. This reaction serves as the major source of one-carbon groups required for the biosynthesis of purines, thymidylate, methionine, and other important biomolecules. Also exhibits THF-independent aldolase activity toward beta-hydroxyamino acids, producing glycine and aldehydes, via a retro-aldol mechanism. The chain is Serine hydroxymethyltransferase from Thermodesulfovibrio yellowstonii (strain ATCC 51303 / DSM 11347 / YP87).